Here is a 133-residue protein sequence, read N- to C-terminus: Large ribosomal subunit protein bL20 (133 aa).

This sequence belongs to the bacterial ribosomal protein bL20 family.

In terms of biological role, binds directly to 23S ribosomal RNA and is necessary for the in vitro assembly process of the 50S ribosomal subunit. It is not involved in the protein synthesizing functions of that subunit. This Rubrobacter xylanophilus (strain DSM 9941 / JCM 11954 / NBRC 16129 / PRD-1) protein is Large ribosomal subunit protein bL20.